Consider the following 438-residue polypeptide: Adenosylhomocysteinase (438 aa).

3 residues coordinate substrate: T64, D139, and E164. An NAD(+)-binding site is contributed by 165 to 167 (TTT). The substrate site is built by K194 and D198. NAD(+) is bound by residues N199, 228–233 (GYGDVG), E251, N286, 307–309 (IGH), and N352.

It belongs to the adenosylhomocysteinase family. Requires NAD(+) as cofactor.

The protein resides in the cytoplasm. The catalysed reaction is S-adenosyl-L-homocysteine + H2O = L-homocysteine + adenosine. It participates in amino-acid biosynthesis; L-homocysteine biosynthesis; L-homocysteine from S-adenosyl-L-homocysteine: step 1/1. Functionally, may play a key role in the regulation of the intracellular concentration of adenosylhomocysteine. The protein is Adenosylhomocysteinase of Coxiella burnetii (strain RSA 493 / Nine Mile phase I).